The following is a 588-amino-acid chain: Hyaluronan synthase 1 (588 aa).

Residues 1 to 28 (MKEKAAETMEIPEGIPKDLEPKHPTLWR) are Cytoplasmic-facing. Residues 29 to 49 (IIYYSFGVVLLATITAAYVAE) form a helical membrane-spanning segment. Over 50-61 (FQVLKHEAILFS) the chain is Extracellular. The helical transmembrane segment at 62–82 (LGLYGLAMLLHLMMQSLFAFL) threads the bilayer. At 83-411 (EIRRVNKSEL…IWMTYESVVS (329 aa)) the chain is on the cytoplasmic side. Residues 412–432 (FIFPFFITATVIRLIYAGTIW) traverse the membrane as a helical segment. Residue Asn433 is a topological domain, extracellular. Residues 434 to 454 (VVWLLLCIQIMSLFKSIYACW) form a helical membrane-spanning segment. At 455–456 (LR) the chain is on the cytoplasmic side. Residues 457-477 (GNFIMLLMSLYSMLYMTGLLP) traverse the membrane as a helical segment. Residues 478-505 (SKYFALLTLNKTGWGTSGRKKIVGNYMP) lie on the Extracellular side of the membrane. Residues 506 to 526 (ILPLSIWAAVLCGGVGYSIYM) traverse the membrane as a helical segment. Topologically, residues 527–543 (DCQNDWSTPEKQKEMYH) are cytoplasmic. A helical membrane pass occupies residues 544–564 (LLYGCVGYVMYWVIMAVMYWV). Residues 565–588 (WVKRCCRKRSQTVTLVHDIPDMCV) are Extracellular-facing.

The protein belongs to the NodC/HAS family. Mg(2+) serves as cofactor. As to expression, expression moves as a gradient through the embryo. The mRNA is first expressed in the animal region of the blastula, and by early gastrula is found everywhere except in the outer layer of the dorsal blastopore lip. By mid-gastrula, protein is present in the inner ectodermal layer and the endoderm, then disappears from dorsal ectoderm as the neural plate is induced and later decays in a dorsoventral direction. Last expressed in ventral regions of the gut at the tailbud stage (at protein level).

Its subcellular location is the membrane. It carries out the reaction [hyaluronan](n) + UDP-N-acetyl-alpha-D-glucosamine = N-acetyl-beta-D-glucosaminyl-(1-&gt;4)-[hyaluronan](n) + UDP + H(+). The catalysed reaction is N-acetyl-beta-D-glucosaminyl-(1-&gt;4)-[hyaluronan](n) + UDP-alpha-D-glucuronate = [hyaluronan](n+1) + UDP + H(+). The protein operates within glycan biosynthesis; hyaluronan biosynthesis. Catalyzes the addition of GlcNAc or GlcUA monosaccharides to the nascent hyaluronan polymer. Therefore, it is essential to hyaluronan synthesis a major component of most extracellular matrices that has a structural role in tissues architectures and regulates cell adhesion, migration and differentiation. Also able to catalyze the synthesis of chito-oligosaccharide depending on the substrate. This Xenopus laevis (African clawed frog) protein is Hyaluronan synthase 1 (has1).